Consider the following 258-residue polypeptide: UPF0246 protein Bpro_3713 (258 aa).

This sequence belongs to the UPF0246 family.

The polypeptide is UPF0246 protein Bpro_3713 (Polaromonas sp. (strain JS666 / ATCC BAA-500)).